The following is a 322-amino-acid chain: Putative small RNA degrading nuclease 4 (322 aa).

An Exonuclease domain is found at 75 to 213 (MLALDCEMVL…HDAAAAMKLA (139 aa)).

The protein belongs to the REXO1/REXO3 family.

The protein localises to the nucleus. Its function is as follows. Putative 3'-5' exonuclease degrading single-stranded small RNAs. This is Putative small RNA degrading nuclease 4 (SDN4) from Arabidopsis thaliana (Mouse-ear cress).